We begin with the raw amino-acid sequence, 180 residues long: MIGELVKDKILIKNIEDARLIYKMGYYGKPIGISKPKSAEEINSELILSLIEGVYLVKKGKLEIVSNGERLDFERLYQIGVTQIPRFRILYSVYEDLREKGYVVRSGIKYGADFAVYTIGPGIEHAPYLVIALDENSQISSNEILGFGRVSHSTRKELILGIVNLTNGKIRYIMFKWLKM.

Residues tyrosine 117, histidine 125, and lysine 156 contribute to the active site.

Belongs to the tRNA-intron endonuclease family. Archaeal short subfamily. Homotetramer; although the tetramer contains four active sites, only two participate in the cleavage. Therefore, it should be considered as a dimer of dimers.

The enzyme catalyses pretRNA = a 3'-half-tRNA molecule with a 5'-OH end + a 5'-half-tRNA molecule with a 2',3'-cyclic phosphate end + an intron with a 2',3'-cyclic phosphate and a 5'-hydroxyl terminus.. Endonuclease that removes tRNA introns. Cleaves pre-tRNA at the 5'- and 3'-splice sites to release the intron. The products are an intron and two tRNA half-molecules bearing 2',3' cyclic phosphate and 5'-OH termini. Recognizes a pseudosymmetric substrate in which 2 bulged loops of 3 bases are separated by a stem of 4 bp. The sequence is that of tRNA-splicing endonuclease from Sulfurisphaera tokodaii (strain DSM 16993 / JCM 10545 / NBRC 100140 / 7) (Sulfolobus tokodaii).